The chain runs to 387 residues: Erythronate-4-phosphate dehydrogenase (387 aa).

Residues Ser-45 and Thr-67 each contribute to the substrate site. Asp-147 serves as a coordination point for NAD(+). Arg-208 is an active-site residue. Asp-232 contacts NAD(+). Residue Glu-237 is part of the active site. The Proton donor role is filled by His-254. Gly-257 contributes to the NAD(+) binding site. Tyr-258 contacts substrate.

This sequence belongs to the D-isomer specific 2-hydroxyacid dehydrogenase family. PdxB subfamily. In terms of assembly, homodimer.

It localises to the cytoplasm. It catalyses the reaction 4-phospho-D-erythronate + NAD(+) = (R)-3-hydroxy-2-oxo-4-phosphooxybutanoate + NADH + H(+). Its pathway is cofactor biosynthesis; pyridoxine 5'-phosphate biosynthesis; pyridoxine 5'-phosphate from D-erythrose 4-phosphate: step 2/5. In terms of biological role, catalyzes the oxidation of erythronate-4-phosphate to 3-hydroxy-2-oxo-4-phosphonooxybutanoate. In Shewanella woodyi (strain ATCC 51908 / MS32), this protein is Erythronate-4-phosphate dehydrogenase.